The sequence spans 305 residues: 4-diphosphocytidyl-2-C-methyl-D-erythritol kinase (305 aa).

Lysine 18 is a catalytic residue. An ATP-binding site is contributed by 103-113 (PYGAGLGGGSS). The active site involves aspartate 145.

It belongs to the GHMP kinase family. IspE subfamily.

It carries out the reaction 4-CDP-2-C-methyl-D-erythritol + ATP = 4-CDP-2-C-methyl-D-erythritol 2-phosphate + ADP + H(+). Its pathway is isoprenoid biosynthesis; isopentenyl diphosphate biosynthesis via DXP pathway; isopentenyl diphosphate from 1-deoxy-D-xylulose 5-phosphate: step 3/6. In terms of biological role, catalyzes the phosphorylation of the position 2 hydroxy group of 4-diphosphocytidyl-2C-methyl-D-erythritol. This Lawsonia intracellularis (strain PHE/MN1-00) protein is 4-diphosphocytidyl-2-C-methyl-D-erythritol kinase.